The sequence spans 767 residues: Actin filament-associated protein 1-like 1 (767 aa).

A compositionally biased stretch (basic and acidic residues) spans 83–97; sequence LRDMSDDGERSKEAS. Positions 83–145 are disordered; sequence LRDMSDDGER…KSPEYISSHN (63 aa). Residues S87, S93, S97, S103, and S152 each carry the phosphoserine modification. The span at 164 to 173 shows a compositional bias: polar residues; that stretch reads SYPTTRMNGE. The disordered stretch occupies residues 164 to 210; the sequence is SYPTTRMNGESKSSYNDSDAMSSSYESYDEEEEEEKGRQPKHQWPSE. Residues 174 to 189 show a composition bias toward low complexity; that stretch reads SKSSYNDSDAMSSSYE. Positions 219-315 constitute a PH 1 domain; the sequence is DCRICAFLLR…WLKVIREVSR (97 aa). 2 positions are modified to phosphoserine: S328 and S342. The segment at 341–381 is disordered; it reads LSQEKQNSDSDSLGMNDSSSTLSRREACEHGKGKKNSLAEL. Over residues 349 to 362 the composition is skewed to polar residues; that stretch reads DSDSLGMNDSSSTL. A PH 2 domain is found at 417–511; sequence EAPCCGYLNV…WLGLLLVEMG (95 aa). Phosphotyrosine is present on Y556. The tract at residues 563 to 605 is disordered; it reads KVQDEEPQRPTGAQVKRHASSCSEKSHRADPQVKVKRHASSAN. Residues 586–595 are compositionally biased toward basic and acidic residues; that stretch reads EKSHRADPQV. Residues 610–700 adopt a coiled-coil conformation; sequence GKNRAEEDAR…AVKERLQQSL (91 aa). Residues 704-767 form a disordered region; it reads PALGLSVSSK…KAKEWEMKKT (64 aa). The segment covering 709-733 has biased composition (polar residues); it reads SVSSKSKSQETTNKPQSSVPEQSLP. Phosphoserine is present on S746. Residues 758–767 are compositionally biased toward basic and acidic residues; the sequence is KAKEWEMKKT.

In terms of assembly, interacts with CTTN.

The protein resides in the cytoplasm. It localises to the cell projection. It is found in the podosome. Its subcellular location is the invadopodium. In terms of biological role, may be involved in podosome and invadosome formation. The polypeptide is Actin filament-associated protein 1-like 1 (Afap1l1) (Rattus norvegicus (Rat)).